The following is a 457-amino-acid chain: Cytochrome b-c1 complex subunit 1, mitochondrial (457 aa).

A mitochondrion-targeting transit peptide spans 1–26; the sequence is MLRTVTSKTVSNQFKRSLATAVATPK.

Belongs to the peptidase M16 family. UQCRC1/QCR1 subfamily. Component of the ubiquinol-cytochrome c oxidoreductase (cytochrome b-c1 complex, complex III, CIII), a multisubunit enzyme composed of 10 subunits. The complex is composed of 3 respiratory subunits cytochrome b (COB), cytochrome c1 (CYT1) and Rieske protein (RIP1), 2 core protein subunits COR1 and QCR2, and 5 low-molecular weight protein subunits QCR6, QCR7, QCR8, QCR9 and QCR10. The complex exists as an obligatory dimer and forms supercomplexes (SCs) in the inner mitochondrial membrane with a monomer or a dimer of cytochrome c oxidase (complex IV, CIV), resulting in 2 different assemblies (supercomplexes III(2)IV and III(2)IV(2)). COR1 interacts with COX5A at the CIII-CIV interface.

Its subcellular location is the mitochondrion inner membrane. Functionally, component of the ubiquinol-cytochrome c oxidoreductase, a multisubunit transmembrane complex that is part of the mitochondrial electron transport chain which drives oxidative phosphorylation. The respiratory chain contains 3 multisubunit complexes succinate dehydrogenase (complex II, CII), ubiquinol-cytochrome c oxidoreductase (cytochrome b-c1 complex, complex III, CIII) and cytochrome c oxidase (complex IV, CIV), that cooperate to transfer electrons derived from NADH and succinate to molecular oxygen, creating an electrochemical gradient over the inner membrane that drives transmembrane transport and the ATP synthase. The cytochrome b-c1 complex catalyzes electron transfer from ubiquinol to cytochrome c, linking this redox reaction to translocation of protons across the mitochondrial inner membrane, with protons being carried across the membrane as hydrogens on the quinol. In the process called Q cycle, 2 protons are consumed from the matrix, 4 protons are released into the intermembrane space and 2 electrons are passed to cytochrome c. This Saccharomyces cerevisiae (strain ATCC 204508 / S288c) (Baker's yeast) protein is Cytochrome b-c1 complex subunit 1, mitochondrial (COR1).